The primary structure comprises 878 residues: Ecdysone receptor (878 aa).

2 disordered regions span residues 1 to 27 (MKRR…SSSN) and 209 to 254 (GLGM…SKKG). Residues 1–263 (MKRRWSNNGG…GPAPRVQEEL (263 aa)) form a modulating region. NR C4-type zinc fingers lie at residues 264 to 284 (CLVC…CEGC) and 300 to 324 (CKFG…LKKC). The nuclear receptor DNA-binding region spans 264 to 336 (CLVCGDRASG…VGMRPECVVP (73 aa)). Positions 344–374 (RREKKAQKEKDKMTTSPSSQHGGNGSLASGG) are disordered. Residues 365 to 374 (GGNGSLASGG) are compositionally biased toward gly residues. Residues 419 to 654 (NQLAVIYKLI…FLEEIWDVHA (236 aa)) form the NR LBD domain. Composition is skewed to low complexity over residues 698 to 709 (TSAAAAAAQHQP) and 728 to 759 (QTQP…QLQP). Residues 698–759 (TSAAAAAAQH…QPQLQTQLQP (62 aa)) are disordered.

The protein belongs to the nuclear hormone receptor family. NR1 subfamily. In terms of assembly, heterodimer of USP and ECR. Only the heterodimer is capable of high-affinity binding to ecdysone. Interacts with trr in an ecdysone-dependent manner. Upon ecdysone stimulation, interacts with Nup98. As to expression, isoform B1 predominates over isoform A in larval tissues, imaginal histoblast nests and midgut islands. Isoform A predominates over B1 in imaginal disks, and the larval prothoracic gland.

The protein localises to the nucleus. In terms of biological role, receptor for ecdysone. Binds to ecdysone response elements (ECRES) following ecdysone-binding, and recruitment of a complex containing the histone methyltransferase trr, leads to activate transcription of target genes. This Drosophila melanogaster (Fruit fly) protein is Ecdysone receptor (EcR).